An 821-amino-acid polypeptide reads, in one-letter code: Ribonuclease R (821 aa).

Residues 267–593 (RVDLRALPLV…LLHRAIKYLI (327 aa)) enclose the RNB domain. Positions 652 to 733 (GEELEGVVAN…DDRQIDFELV (82 aa)) constitute an S1 motif domain. The disordered stretch occupies residues 739 to 821 (LRGQGKTAKK…KSGKVRDKTK (83 aa)). Composition is skewed to basic and acidic residues over residues 748–764 (KRAD…KEAA) and 774–794 (TKSE…EGRS). Basic residues predominate over residues 795-814 (KPKKTKAPKKRKDQARKKSG).

It belongs to the RNR ribonuclease family. RNase R subfamily.

The protein resides in the cytoplasm. The catalysed reaction is Exonucleolytic cleavage in the 3'- to 5'-direction to yield nucleoside 5'-phosphates.. Its function is as follows. 3'-5' exoribonuclease that releases 5'-nucleoside monophosphates and is involved in maturation of structured RNAs. The polypeptide is Ribonuclease R (Vibrio cholerae serotype O1 (strain ATCC 39315 / El Tor Inaba N16961)).